Reading from the N-terminus, the 333-residue chain is Fructose-1,6-bisphosphatase class 1 (333 aa).

Mg(2+) contacts are provided by Glu90, Asp112, Leu114, and Asp115. Substrate-binding positions include 115-118 (DGSS), Asn207, and Lys273. Residue Glu279 participates in Mg(2+) binding.

Belongs to the FBPase class 1 family. In terms of assembly, homotetramer. The cofactor is Mg(2+).

Its subcellular location is the cytoplasm. It carries out the reaction beta-D-fructose 1,6-bisphosphate + H2O = beta-D-fructose 6-phosphate + phosphate. The protein operates within carbohydrate biosynthesis; gluconeogenesis. The polypeptide is Fructose-1,6-bisphosphatase class 1 (Azoarcus sp. (strain BH72)).